Here is a 309-residue protein sequence, read N- to C-terminus: Taste receptor type 2 member 114 (309 aa).

Topologically, residues 1–7 (MLSTMEG) are extracellular. The helical transmembrane segment at 8–28 (VLLSVSTSEAVLGIVGNTFIA) threads the bilayer. The Cytoplasmic portion of the chain corresponds to 29–43 (LVNCMDYNRNKKLSN). Residues 44 to 64 (IGFILTGLAISRICLVLILIT) form a helical membrane-spanning segment. Residues 65–87 (EAYIKIFYPQLLSPVNIIELISY) are Extracellular-facing. Residues 88-108 (LWIIICQLNVWFATSLSIFYF) form a helical membrane-spanning segment. The Cytoplasmic portion of the chain corresponds to 109 to 127 (LKIANFSHYIFVWLKRRID). The chain crosses the membrane as a helical span at residues 128–148 (LVFFFLIGCLLISWLFSFPVV). Topologically, residues 149 to 182 (AKMVKDNKMLYINTSWQIHMKKSELIINYVFTNG) are extracellular. Asparagine 161 carries an N-linked (GlcNAc...) asparagine glycan. A helical membrane pass occupies residues 183–203 (GVFLFFMIMLIVCFLLIISLW). Residues 204–233 (RHRRQMESNKLGFRDLNTEVHVRTIKVLLS) lie on the Cytoplasmic side of the membrane. The helical transmembrane segment at 234 to 254 (FIILFILHFMGITINVICLLI) threads the bilayer. The Extracellular segment spans residues 255–259 (PESNL). Residues 260 to 280 (LFMFGLTTAFIYPGCHSLILI) traverse the membrane as a helical segment. Topologically, residues 281 to 309 (LANSRLKQCSVMILQLLKCCENGKELRDT) are cytoplasmic.

It belongs to the G-protein coupled receptor T2R family.

It is found in the membrane. In terms of biological role, putative taste receptor which may play a role in the perception of bitterness. This Mus musculus (Mouse) protein is Taste receptor type 2 member 114.